The primary structure comprises 411 residues: Ribose-phosphate pyrophosphokinase 3, chloroplastic (411 aa).

The N-terminal 39 residues, 1-39 (MAAISPANATTAASLSLPQFSSTSSSLSSSSSPSFLNFK), are a transit peptide targeting the chloroplast. Residues Asp231 and His233 each contribute to the Mg(2+) site. Positions 314–329 (GRHVVIVDDLVQSGGT) are binding of phosphoribosylpyrophosphate.

This sequence belongs to the ribose-phosphate pyrophosphokinase family.

The protein resides in the plastid. It is found in the chloroplast. The enzyme catalyses D-ribose 5-phosphate + ATP = 5-phospho-alpha-D-ribose 1-diphosphate + AMP + H(+). This is Ribose-phosphate pyrophosphokinase 3, chloroplastic (PRS3) from Arabidopsis thaliana (Mouse-ear cress).